A 256-amino-acid chain; its full sequence is 1-(5-phosphoribosyl)-5-[(5-phosphoribosylamino)methylideneamino] imidazole-4-carboxamide isomerase (256 aa).

The Proton acceptor role is filled by Asp-8. Residue Asp-129 is the Proton donor of the active site.

Belongs to the HisA/HisF family.

Its subcellular location is the cytoplasm. The catalysed reaction is 1-(5-phospho-beta-D-ribosyl)-5-[(5-phospho-beta-D-ribosylamino)methylideneamino]imidazole-4-carboxamide = 5-[(5-phospho-1-deoxy-D-ribulos-1-ylimino)methylamino]-1-(5-phospho-beta-D-ribosyl)imidazole-4-carboxamide. Its pathway is amino-acid biosynthesis; L-histidine biosynthesis; L-histidine from 5-phospho-alpha-D-ribose 1-diphosphate: step 4/9. In Prochlorococcus marinus (strain NATL2A), this protein is 1-(5-phosphoribosyl)-5-[(5-phosphoribosylamino)methylideneamino] imidazole-4-carboxamide isomerase.